The sequence spans 387 residues: S-adenosylmethionine synthase (387 aa).

Glutamate 8 lines the Mg(2+) pocket. Histidine 14 is a binding site for ATP. Glutamate 42 lines the K(+) pocket. Residues glutamate 55 and glutamine 98 each contribute to the L-methionine site. ATP-binding positions include aspartate 166 to lysine 168, serine 234 to phenylalanine 237, aspartate 245, arginine 251 to lysine 252, alanine 268, lysine 272, and lysine 276. An L-methionine-binding site is contributed by aspartate 245. L-methionine is bound at residue lysine 276.

This sequence belongs to the AdoMet synthase family. As to quaternary structure, homotetramer. Mn(2+) is required as a cofactor. Mg(2+) serves as cofactor. Requires Co(2+) as cofactor. The cofactor is K(+).

It is found in the cytoplasm. It catalyses the reaction L-methionine + ATP + H2O = S-adenosyl-L-methionine + phosphate + diphosphate. Its pathway is amino-acid biosynthesis; S-adenosyl-L-methionine biosynthesis; S-adenosyl-L-methionine from L-methionine: step 1/1. Its function is as follows. Catalyzes the formation of S-adenosylmethionine from methionine and ATP. The reaction comprises two steps that are both catalyzed by the same enzyme: formation of S-adenosylmethionine (AdoMet) and triphosphate, and subsequent hydrolysis of the triphosphate. The protein is S-adenosylmethionine synthase (METK-1) of Ostreococcus lucimarinus (strain CCE9901).